The sequence spans 210 residues: Ribosomal RNA large subunit methyltransferase E (210 aa).

Residues G60, W62, D85, D101, and D126 each coordinate S-adenosyl-L-methionine. The active-site Proton acceptor is K166.

This sequence belongs to the class I-like SAM-binding methyltransferase superfamily. RNA methyltransferase RlmE family.

The protein resides in the cytoplasm. The enzyme catalyses uridine(2552) in 23S rRNA + S-adenosyl-L-methionine = 2'-O-methyluridine(2552) in 23S rRNA + S-adenosyl-L-homocysteine + H(+). Functionally, specifically methylates the uridine in position 2552 of 23S rRNA at the 2'-O position of the ribose in the fully assembled 50S ribosomal subunit. In Bordetella pertussis (strain Tohama I / ATCC BAA-589 / NCTC 13251), this protein is Ribosomal RNA large subunit methyltransferase E.